Reading from the N-terminus, the 528-residue chain is Phosphoenolpyruvate carboxykinase (ATP) (528 aa).

Positions 56, 192, and 198 each coordinate substrate. Residues Lys-198, His-217, and Gly-233–Thr-241 each bind ATP. Positions 198 and 217 each coordinate Mn(2+). Asp-254 serves as a coordination point for Mn(2+). Glu-282, Arg-319, and Thr-444 together coordinate ATP. Arg-319 serves as a coordination point for substrate.

It belongs to the phosphoenolpyruvate carboxykinase (ATP) family. Mn(2+) serves as cofactor.

The protein localises to the cytoplasm. It carries out the reaction oxaloacetate + ATP = phosphoenolpyruvate + ADP + CO2. The protein operates within carbohydrate biosynthesis; gluconeogenesis. Involved in the gluconeogenesis. Catalyzes the conversion of oxaloacetate (OAA) to phosphoenolpyruvate (PEP) through direct phosphoryl transfer between the nucleoside triphosphate and OAA. This is Phosphoenolpyruvate carboxykinase (ATP) from Bacillus cereus (strain G9842).